A 297-amino-acid polypeptide reads, in one-letter code: Aspartate carbamoyltransferase catalytic subunit (297 aa).

Positions 51 and 52 each coordinate carbamoyl phosphate. Lys-79 provides a ligand contact to L-aspartate. Carbamoyl phosphate contacts are provided by Arg-101, His-130, and Gln-133. Residues Arg-163 and Arg-215 each coordinate L-aspartate. Carbamoyl phosphate is bound by residues Gly-256 and Pro-257.

It belongs to the aspartate/ornithine carbamoyltransferase superfamily. ATCase family. In terms of assembly, heterododecamer (2C3:3R2) of six catalytic PyrB chains organized as two trimers (C3), and six regulatory PyrI chains organized as three dimers (R2).

The enzyme catalyses carbamoyl phosphate + L-aspartate = N-carbamoyl-L-aspartate + phosphate + H(+). Its pathway is pyrimidine metabolism; UMP biosynthesis via de novo pathway; (S)-dihydroorotate from bicarbonate: step 2/3. In terms of biological role, catalyzes the condensation of carbamoyl phosphate and aspartate to form carbamoyl aspartate and inorganic phosphate, the committed step in the de novo pyrimidine nucleotide biosynthesis pathway. This chain is Aspartate carbamoyltransferase catalytic subunit, found in Ehrlichia ruminantium (strain Gardel).